Here is a 621-residue protein sequence, read N- to C-terminus: Kelch-like protein 40 (621 aa).

One can recognise a BTB domain in the interval 33–98; it reads LDCVVRVGER…LYTSEIALDE (66 aa). The 107-residue stretch at 133–239 folds into the BACK domain; that stretch reads CLAVFRLGLL…PRAFLETRVE (107 aa). The disordered stretch occupies residues 265–298; sequence LTTLRKKKKEKGEQTARAKEANQGTEDTKAEDDE. Basic and acidic residues predominate over residues 274–284; sequence EKGEQTARAKE. 5 Kelch repeats span residues 360-412, 413-462, 463-510, 512-557, and 559-613; these read QVFV…EALN, AIYV…SHMD, LVYV…VHDG, IFVA…SLAG, and LYAL…PVRL.

The protein belongs to the KLHL40 family. In terms of assembly, component of the BCR(KLHL40) E3 ubiquitin ligase complex, at least composed of CUL3, KLHL40 and RBX1. Interacts with LMOD3. Specifically expressed in skeletal muscles in embryonic, neonatal and adults. Expressed in various types of muscles, including extensor digitorum longus, gastrocnemius, soleus, diaphragm, masseter and heart (at protein level). Not detected in brain, liver and lung (at protein level).

Its subcellular location is the cytoplasm. The protein localises to the myofibril. It is found in the sarcomere. It localises to the a band. The protein resides in the i band. In terms of biological role, substrate-specific adapter of a BCR (BTB-CUL3-RBX1) E3 ubiquitin ligase complex that acts as a key regulator of skeletal muscle development. The BCR(KLHL40) complex acts by mediating ubiquitination and degradation of TFDP1, thereby regulating the activity of the E2F:DP transcription factor complex. Promotes stabilization of LMOD3 by acting as a negative regulator of LMOD3 ubiquitination; the molecular process by which it negatively regulates ubiquitination of LMOD3 is however unclear. This Mus musculus (Mouse) protein is Kelch-like protein 40.